Consider the following 562-residue polypeptide: NAD-dependent malic enzyme (562 aa).

Tyr101 acts as the Proton donor in catalysis. Position 154 (Arg154) interacts with NAD(+). Lys172 acts as the Proton acceptor in catalysis. Glu243, Asp244, and Asp267 together coordinate a divalent metal cation. NAD(+) contacts are provided by Asp267 and Asn415.

This sequence belongs to the malic enzymes family. Homotetramer. Mg(2+) serves as cofactor. Mn(2+) is required as a cofactor.

The catalysed reaction is (S)-malate + NAD(+) = pyruvate + CO2 + NADH. It catalyses the reaction oxaloacetate + H(+) = pyruvate + CO2. The protein is NAD-dependent malic enzyme of Shewanella sp. (strain ANA-3).